The following is a 279-amino-acid chain: Proteasome subunit beta 2 (279 aa).

Positions 1–53 are cleaved as a propeptide — removed in mature form; by autocatalysis; it reads MAAAFDPSGRFPDLFTSVGTSSFSAFLSKAAPELLPGRRPLPPGMATGLTPHA. The active-site Nucleophile is threonine 54.

Belongs to the peptidase T1B family. In terms of assembly, the 20S proteasome core is composed of 14 alpha and 14 beta subunits that assemble into four stacked heptameric rings, resulting in a barrel-shaped structure. The two inner rings, each composed of seven catalytic beta subunits, are sandwiched by two outer rings, each composed of seven alpha subunits. The catalytic chamber with the active sites is on the inside of the barrel. Has a gated structure, the ends of the cylinder being occluded by the N-termini of the alpha-subunits. Is capped by the proteasome-associated ATPase, ARC.

Its subcellular location is the cytoplasm. The enzyme catalyses Cleavage of peptide bonds with very broad specificity.. It participates in protein degradation; proteasomal Pup-dependent pathway. Its activity is regulated as follows. The formation of the proteasomal ATPase ARC-20S proteasome complex, likely via the docking of the C-termini of ARC into the intersubunit pockets in the alpha-rings, may trigger opening of the gate for substrate entry. Interconversion between the open-gate and close-gate conformations leads to a dynamic regulation of the 20S proteasome proteolysis activity. Functionally, component of the proteasome core, a large protease complex with broad specificity involved in protein degradation. The sequence is that of Proteasome subunit beta 2 from Salinispora tropica (strain ATCC BAA-916 / DSM 44818 / JCM 13857 / NBRC 105044 / CNB-440).